A 2894-amino-acid polypeptide reads, in one-letter code: uncharacterized protein (2894 aa).

The helical transmembrane segment at 8-28 threads the bilayer; sequence ISIFVFTILLLSNVSLGLNVS. PbH1 repeat units lie at residues 543–567, 2085–2107, 2135–2156, 2158–2180, 2201–2223, 2224–2244, 2245–2266, 2267–2289, 2290–2311, 2341–2363, 2367–2389, 2390–2419, 2422–2444, 2455–2477, 2479–2501, 2512–2542, 2550–2582, 2589–2611, 2612–2633, and 2638–2660; these read EVRWYIENNTLYFYDDPIYGYDISL, NYPLYIDNLTINASGGYGISMLN, FGNITIYNITISSCNQGLVLYK, GNGIKLINSQIKNSVYEGVYSKN, ISSILVNNSLIYKNRYEGLLLEN, SSSSILNSNIMNNSIGIYLKE, NYISKIQKSNISYNAYGIEIVN, SSNVYINSSNIFNASTDGIAIFN, GENVSVENSLLYNNNYSILSYG, LNNLKLYNSSVLNSGSYGLFIYS, ASNVNISKSLINGSYKDGIYIYG, VNAINIVNNNITNNGLIGGDPAGSGIKISG, TKGVLILNNNISHNLGNGISLEG, VENNIISNNGIEENSGNGIYIGG, VENVSIFNNTIQYSDAQAILIQE, GTNISIINNTIQYNGLTVTIGNITAGITVGA, NGYIIIEGNKIINNNLCPNPTYGGKVGGIEVYG, SLEFNISKNIIANNSAYGILIGA, SKDINIINNTIFNNEKGITIPN, and PYNIIISKNSIYNNSLLGIDLDD.

The protein localises to the membrane. This is an uncharacterized protein from Methanocaldococcus jannaschii (strain ATCC 43067 / DSM 2661 / JAL-1 / JCM 10045 / NBRC 100440) (Methanococcus jannaschii).